Here is a 207-residue protein sequence, read N- to C-terminus: Guanylate kinase (207 aa).

The region spanning 6–185 (GLLIVLSGPS…AKERIQSIVE (180 aa)) is the Guanylate kinase-like domain. 13–20 (GPSGVGKG) is an ATP binding site.

The protein belongs to the guanylate kinase family.

The protein resides in the cytoplasm. The enzyme catalyses GMP + ATP = GDP + ADP. In terms of biological role, essential for recycling GMP and indirectly, cGMP. The protein is Guanylate kinase of Staphylococcus haemolyticus (strain JCSC1435).